The following is a 399-amino-acid chain: Tryptophan synthase beta chain (399 aa).

Position 92 is an N6-(pyridoxal phosphate)lysine (Lys-92).

Belongs to the TrpB family. As to quaternary structure, tetramer of two alpha and two beta chains. The cofactor is pyridoxal 5'-phosphate.

The enzyme catalyses (1S,2R)-1-C-(indol-3-yl)glycerol 3-phosphate + L-serine = D-glyceraldehyde 3-phosphate + L-tryptophan + H2O. It functions in the pathway amino-acid biosynthesis; L-tryptophan biosynthesis; L-tryptophan from chorismate: step 5/5. Functionally, the beta subunit is responsible for the synthesis of L-tryptophan from indole and L-serine. The chain is Tryptophan synthase beta chain from Acidithiobacillus ferrooxidans (strain ATCC 23270 / DSM 14882 / CIP 104768 / NCIMB 8455) (Ferrobacillus ferrooxidans (strain ATCC 23270)).